The primary structure comprises 211 residues: Protein-L-isoaspartate O-methyltransferase (211 aa).

Residue S60 is part of the active site.

It belongs to the methyltransferase superfamily. L-isoaspartyl/D-aspartyl protein methyltransferase family.

It is found in the cytoplasm. It carries out the reaction [protein]-L-isoaspartate + S-adenosyl-L-methionine = [protein]-L-isoaspartate alpha-methyl ester + S-adenosyl-L-homocysteine. Its function is as follows. Catalyzes the methyl esterification of L-isoaspartyl residues in peptides and proteins that result from spontaneous decomposition of normal L-aspartyl and L-asparaginyl residues. It plays a role in the repair and/or degradation of damaged proteins. This chain is Protein-L-isoaspartate O-methyltransferase, found in Pseudomonas syringae pv. syringae (strain B728a).